Reading from the N-terminus, the 608-residue chain is MRKLIFMALLMSLLFIGTVFGYGDNGPLYVAYYEKYNITGNTTGDGLVSSTIESITGYIVINNTGTTINDTLYDVWVAVNISNNITGPEVYVNGTPKGVFIESSAPAYTNLPNANTYIHIPILPNNSYVIIKFAIDKSITGVPLIINETYSDTKIPSERLSNWSVYLNISRNVSALPATDTPVSVIMTKYLSNDPNNYGSDTWNFLNITGAIANEGSITLWDGPYFLPGYNDSLTWTGVVINTTKNATITINITGNNTYTNRTGTLMKYGFAVIFFEFNGTKSGTKIEGIYATGYGGVSATKEGPFLNASSGKYEIWYESANVSNKASSYYFNLTHVTIWAVNGSNPVILDPFNITLLIPNSKQTSSPNEILSPGSVWSSTKYAFTFDGIPVVWANCTFKVADENITLINRSINEYSTKYGSSYVVVEEIYVVGSYLIKVTKHIVPDADGTYDIYIVVENIGSVKTPEYVYVYDLIPKNFTVSDEWVNQSSMLIAEGNHTITTNPRYNLSMWWALHAIYPGADGDGNWNDTAEILANKTVVIHYKLNGTGEFYPSDAFIVGIDPTNSLLPTTSPKITTVAGTVENNSEPFLALLTLLVGLGIIIRRVM.

Residues L4–D24 traverse the membrane as a helical segment.

To M.jannaschii MJ1394 and A.fulgidus AF2028.

The protein resides in the membrane. This is an uncharacterized protein from Methanocaldococcus jannaschii (strain ATCC 43067 / DSM 2661 / JAL-1 / JCM 10045 / NBRC 100440) (Methanococcus jannaschii).